Reading from the N-terminus, the 133-residue chain is Stage III sporulation protein AD (133 aa).

3 consecutive transmembrane segments (helical) span residues 2–22 (QIDIVQIVGLGLIATFLSLIV), 29–49 (FAFLIVVFAGCAIFLYLVDQI), and 108–128 (ILILVMAVPILTVIIETILGL).

It is found in the cell membrane. The polypeptide is Stage III sporulation protein AD (spoIIIAD) (Bacillus subtilis (strain 168)).